The sequence spans 220 residues: Deoxyribose-phosphate aldolase 1 (220 aa).

The Proton donor/acceptor role is filled by D89. Residue K151 is the Schiff-base intermediate with acetaldehyde of the active site. K180 functions as the Proton donor/acceptor in the catalytic mechanism.

The protein belongs to the DeoC/FbaB aldolase family. DeoC type 1 subfamily.

The protein localises to the cytoplasm. It carries out the reaction 2-deoxy-D-ribose 5-phosphate = D-glyceraldehyde 3-phosphate + acetaldehyde. It participates in carbohydrate degradation; 2-deoxy-D-ribose 1-phosphate degradation; D-glyceraldehyde 3-phosphate and acetaldehyde from 2-deoxy-alpha-D-ribose 1-phosphate: step 2/2. Functionally, catalyzes a reversible aldol reaction between acetaldehyde and D-glyceraldehyde 3-phosphate to generate 2-deoxy-D-ribose 5-phosphate. The protein is Deoxyribose-phosphate aldolase 1 of Staphylococcus aureus (strain MRSA252).